A 2464-amino-acid chain; its full sequence is MSAHTRTDCDHPELPKLATVISGYRHCDLPDLSSDRFPASTTYSVSACIKESLISTQVDVLDARAPFAVLVATIGRVLGAYCGCTDVILALTDQDCEDLRTARITWDENTQWADLLHTVLQSLSGDTSFRITVPAIREALGLTEKQAPCLALVRDAPSSDYDNTDFPLVFNWDISTFTLRLFTSERHLHPSGADLLASQIASLLVPALTNPATQVFRLPDLQADLLSIYEKLTFEDRCQAYSRVPPVRLATDHLTLRLASQANDVAVEWYGALADDHHPGTSQPETMTFGEWHRRANQMARWLVARGLEKGDKVAVCMKRDTSYHVSLIAVLKAGACYVPIDPELPSERQSYIACDSGARFVLVSSETASTSIFGDIALEISSNEARRGIEAESDEELDLATPDDVSYLLYTSGTTGTPKGCVLTHRGLSEAVWALSAVCAEVDMEEGHMGNYLSIASVAFDVHLAEIFIPLARGMSIVSAPRSTLLEDLPYFIKELKISHLGIVPSLIEATMGSIQEDVESGGSTTLRYIASGGEKMSDAILDKWANHPTVRLANFYGPSEVTIGCAARFMDKTTPRANIGHPFASVSAFVVDENMNILLRGAPGELVVEGPLVGVGYHGRPDLTEKVFLEFPERGAGRWAYRTGDLVRMMPDGTLEVIGRIDTQIKLRGVRIESEGISSIVRSAGLPEHTLDVVTILGKHPAIGVEQLVSFIVWDQSTSVAVRKSTKPTVIAPSGNLLTKLSAACERELASYMRPSHFIPLNFMPLSSNGKNDAKLLTRVFQELDMDVLGSLMSRGSSTSVGSPNSGRTQLTKAEGQLLEIAKKHVHVPSGAANPNTNLFRYGLDSMSAVRLAAELRRTFSKVITASDILKSPSLEQIAKALDASSSSDQEQSPVESFVQRFSAERMQDVTEAYDSHVISAIYPPFPLQEGILYRSVNADTLYVQHVLLELAPGVSVDKLRQAWIDVVISSPILRTVFHFGRDLVQVVLHSDDVSRDIGEDVVHCDDAEAFKALFAERQSSVASKINQNVADTSPHRFTIYRSKDNGLVFVGLSIHHALFDGISLSHILRNLEKVYLDEPGYPSAAPEAVLDTIASVNVQTAQDFWVQHFAGFDWNRMPSRTASAKRADEKSLTFQIGLSELQRKASERRITLQSLLMTAFAHFLAKYMYGHNDVAFGIIRSGRSLPIADIETTVLPLLSVLPARVVLSASDVLRNVQTFNAEVTAYEHIPLGKIQQWVRPGANLFETLFSLSYKDDGRSSVWRLLESHNPEPDYILAVEVVLDTTEDRLTVQVAYTSQDLSSDIVDHLLDNFEGLALDLAQGSALNVETDSAAESGTALTSSEQTTQVTDIDAGEIDAVDEDLLLRLRKIVANFLQISVDLVTEGVSLVALGLDSIRSVGLSRVLRKEGIELASAEIMKLATPRRMAASAGKKISIPSTTKHKIDAYASSFARERDRIRAALDAASVSLSPDDEVDVFPVTTLQAGMLSQTVSSAGRRYVHLFPLRLTNGVDVAKLRDAWAKTVDALGILRTTFHFVPDLGIWTSAVHSKSPLKWSEIYLLEDASLLPLLDAVTITDAGCNSPPYQLYLVRSQEVDSQEDCRLIMVLHHALYDGVSISKLLDIVGASYNGEVTQNIVQFTSLLPEILWQEHLGTSFWVERLKNFHHGLVVPRLPDGSHSKKSHVASSVLNVSRSEVEKVCRLTAVTTQCVGQYAFAKLLASLTRSTDILFGHVVSGRNVSGAEDVIGPVLNTVPCRVRFASSVSNKLLLQAIHDTNVTALSWQHASLRSIQSHLKVERLWDCLFVFQPSQATETSEHKSVWEFDEVEDEDIDIQYGFNLELHETAAGFLLKAACSDRLMDAEDLGAALERFGLFLRVLVDDLDASCLNGLPDLTAPTTPHSVSESDFETDQIVSSWDEKSSTLRELLSTATGIPSSKIQMSMRLLGLGIDSISAIQIASKARRTGLHLTARDIIQSRTVGDLVMRAGAEDESEDRAGQALQTAFQIPRQEWSALTPKVKESDVDSVTVATPGMQWFMGGWQRSGGSRYQHVFGFELSADVDILKLQKAWDELLTRHAILRAAFSSSAQGEPRVVIYKRESMGARWQEEECDDIQDYDEGVASRMRALISSPPSSMQEPLTRATLLRSPSRNALIIHLHHFQYDAWSLQLLLDDLVRLYQGQPPTSSNDHSAILRVAVPDEHTRTEQRSYWQRMLTPNDPTLILFPKIPGHQARSNSSHNFLMKKSVLTPIADLEARARALSVSLYVVYLTCWAQVQAAATSSNSAIFGLWHSGRTGSIDQVECLAAPCLNILPFVVRGFNSTSTMDIATQIQDDLRERTPLVEQSPLTLVDEVMGGTGRPLCNVFVNIVRAAPELHSTQQTIFTPIDVPYFIPEAPSRGKTAMPELKVTGLIQDDIIVDIVDVSERGEVAMSIEFSEDTLDVETAEAMILQWVQLVKECLA.

Positions 275–670 (DDHHPGTSQP…GRIDTQIKLR (396 aa)) are adenylation 1. Residues 814–888 (TKAEGQLLEI…QIAKALDASS (75 aa)) form the Carrier 1 domain. Ser-848 carries the O-(pantetheine 4'-phosphoryl)serine modification. The condensation 1 stretch occupies residues 924-1325 (IYPPFPLQEG…EGLALDLAQG (402 aa)). The Carrier 2 domain maps to 1364-1437 (EDLLLRLRKI…RMAASAGKKI (74 aa)). Ser-1398 is modified (O-(pantetheine 4'-phosphoryl)serine). The segment at 1479–1887 (DVFPVTTLQA…LRVLVDDLDA (409 aa)) is condensation 2. The 77-residue stretch at 1917–1993 (SSWDEKSSTL…DLVMRAGAED (77 aa)) folds into the Carrier 3 domain. Ser-1954 carries the O-(pantetheine 4'-phosphoryl)serine modification. Residues 2047 to 2340 (GGSRYQHVFG…ATQIQDDLRE (294 aa)) are condensation 3.

It belongs to the NRP synthetase family.

It participates in siderophore biosynthesis. Functionally, nonribosomal peptide synthetase; part of the siderophore basidioferrin biosynthetic pathway. The biosynthesis of basidioferrin depends on the hydroxylation of ornithine to N(5)-hydroxyornithine, catalyzed by the monooxygenase SMO1. The second step, the acylation of N(5)-hydroxy-L-ornithine is catalyzed by a not yet identified N-acyltransferase. Finally, assembly of basidioferrin is catalyzed by the nonribosomal peptide synthase (NRPS) NPS2 via amide bond formation between three L-AHO molecules to release the linear L-AHO trimer. N-5-acetyl-N-5-hydroxy-L-ornithine (L-AHO) and N-5-cis-anhydromevalonyl-N-5-hydroxy-L-ornithine (L-AMHO) are accepted as the substrates by the NPS2 adenylation (A) domain, but only L-AHO is trimerized. The chain is Nonribosomal peptide synthetase NPS2 from Ceriporiopsis subvermispora (strain B) (White-rot fungus).